The sequence spans 140 residues: TPT1-like protein (140 aa).

The TCTP domain maps to 6 to 140 (MITYWDLISH…LANFKNYQKT (135 aa)).

It belongs to the TCTP family.

This chain is TPT1-like protein, found in Homo sapiens (Human).